The primary structure comprises 471 residues: 3-isopropylmalate dehydratase large subunit (471 aa).

[4Fe-4S] cluster is bound by residues Cys-347, Cys-407, and Cys-410.

This sequence belongs to the aconitase/IPM isomerase family. LeuC type 1 subfamily. As to quaternary structure, heterodimer of LeuC and LeuD. Requires [4Fe-4S] cluster as cofactor.

The catalysed reaction is (2R,3S)-3-isopropylmalate = (2S)-2-isopropylmalate. Its pathway is amino-acid biosynthesis; L-leucine biosynthesis; L-leucine from 3-methyl-2-oxobutanoate: step 2/4. In terms of biological role, catalyzes the isomerization between 2-isopropylmalate and 3-isopropylmalate, via the formation of 2-isopropylmaleate. This Acaryochloris marina (strain MBIC 11017) protein is 3-isopropylmalate dehydratase large subunit.